The primary structure comprises 382 residues: SAT4 family membrane protein (382 aa).

Positions 1–22 (MFGAELVGRETGGQSTDQPYSY) are disordered. An N-linked (GlcNAc...) asparagine glycan is attached at N78. A run of 2 helical transmembrane segments spans residues 80–100 (SQIL…LLYL) and 112–132 (YLSI…NFFL). Residue N147 is glycosylated (N-linked (GlcNAc...) asparagine). A run of 3 helical transmembrane segments spans residues 159–179 (ILVT…LPII), 192–212 (LGIS…IMRL), and 228–248 (WYTE…PTFF). N-linked (GlcNAc...) asparagine glycosylation is present at N269.

Belongs to the SAT4 family.

It localises to the membrane. The protein is SAT4 family membrane protein of Emericella nidulans (strain FGSC A4 / ATCC 38163 / CBS 112.46 / NRRL 194 / M139) (Aspergillus nidulans).